A 142-amino-acid polypeptide reads, in one-letter code: Transcription antitermination protein NusB (142 aa).

Belongs to the NusB family.

Involved in transcription antitermination. Required for transcription of ribosomal RNA (rRNA) genes. Binds specifically to the boxA antiterminator sequence of the ribosomal RNA (rrn) operons. The protein is Transcription antitermination protein NusB of Thermotoga sp. (strain RQ2).